Reading from the N-terminus, the 290-residue chain is Pyridoxal kinase PdxY (290 aa).

Substrate is bound by residues Ser12 and 47–48 (TQ). ATP-binding positions include Asp114, Glu151, Lys184, and 211–214 (RPLL). Asp225 is a binding site for substrate.

This sequence belongs to the pyridoxine kinase family. PdxY subfamily. Homodimer. Requires Mg(2+) as cofactor.

The enzyme catalyses pyridoxal + ATP = pyridoxal 5'-phosphate + ADP + H(+). The protein operates within cofactor metabolism; pyridoxal 5'-phosphate salvage; pyridoxal 5'-phosphate from pyridoxal: step 1/1. In terms of biological role, pyridoxal kinase involved in the salvage pathway of pyridoxal 5'-phosphate (PLP). Catalyzes the phosphorylation of pyridoxal to PLP. In Pseudomonas putida (strain GB-1), this protein is Pyridoxal kinase PdxY.